The following is a 113-amino-acid chain: Dynein light chain Tctex-type 1 (113 aa).

N-acetylmethionine is present on methionine 1. An interaction with GNB1 region spans residues 41–113 (QWTTNVLEQT…CIVSTFGLSI (73 aa)).

This sequence belongs to the dynein light chain Tctex-type family. In terms of assembly, homodimer. The cytoplasmic dynein 1 complex consists of two catalytic heavy chains (HCs) and a number of non-catalytic subunits presented by intermediate chains (ICs), light intermediate chains (LICs) and light chains (LCs); the composition seems to vary in respect to the IC, LIC and LC composition. The heavy chain homodimer serves as a scaffold for the probable homodimeric assembly of the respective non-catalytic subunits. The ICs and LICs bind directly to the HC dimer and the LCs assemble on the IC dimer. DYNLT1 and DYNLT3 compete for association with dynein IC (DYNC1I1 or DYNC1I2). Self-associates. Interacts with RHO. Interacts with DYNC1I1 and DYNC1I2. Interacts with DOC2A, DOC2B and SCN10A. Interacts with PVR. Interacts with SVIL isoform 2. Interacts with GNB1; the interaction occurs in presence of guanine nucleotide-binding protein G(T) subunit gamma; the interaction diminishes the association of DYNLT1 with dynein IC (DYNC1I1 or DYNC1I2). Interacts with GNB2, GNB3 and GNB5; the interactions occur in presence of guanine nucleotide-binding protein G(T) subunit gamma. Interacts with ACVR2B and ARHGEF2. Interacts with DNAI4. Interacts with CFAP61. Post-translationally, phosphorylated by BMPR2. The phosphorylation status is proposed to regulate the association with the cytoplasmic dynein complex and may have role in cytoplasmic dynein cargo release. As to expression, high level in testis (germ cell-specific). Expressed in sperm (at protein level). 200-fold lower in liver, brain, heart, spleen, and kidney. Levels in thymus and two embryonal carcinoma cell lines were several-fold higher than this low constitutive level.

The protein resides in the golgi apparatus. It is found in the cytoplasm. It localises to the cytoskeleton. The protein localises to the spindle. Acts as one of several non-catalytic accessory components of the cytoplasmic dynein 1 complex that are thought to be involved in linking dynein to cargos and to adapter proteins that regulate dynein function. Cytoplasmic dynein 1 acts as a motor for the intracellular retrograde motility of vesicles and organelles along microtubules. Binds to transport cargos and is involved in apical cargo transport such as rhodopsin-bearing vesicles in polarized epithelia. May also be a accessory component of axonemal dynein. Plays an important role in male germ cell development and function. Candidate for involvement in male sterility. Functionally, plays a role in neuronal morphogenesis; the function is independent of cytoplasmic dynein and seems to be coupled to regulation of the actin cytoskeleton by enhancing Rac1 activity. The function in neurogenesis may be regulated by association with a G-protein beta-gamma dimer. May function as a receptor-independent activator of heterotrimeric G-protein signaling; the activation appears to be independent of a nucleotide exchange. Plays a role in regulating neurogenesis; inhibits the genesis of neurons from precursor cells during cortical development presumably by antagonizing ARHGEF2. Unrelated to the role in retrograde microtubule-associated movement may play a role in the dimerization of cytoplasmic proteins/domains such as for ACVR2B. Binds to the cytoplasmic domain of ACVR2B and, in vitro, inhibits ACVR2B signaling. Involved in the regulation of mitotic spindle orientation. The sequence is that of Dynein light chain Tctex-type 1 (Dynlt1) from Mus musculus (Mouse).